A 307-amino-acid polypeptide reads, in one-letter code: 4-hydroxybenzoate octaprenyltransferase (307 aa).

A run of 9 helical transmembrane segments spans residues Pro19–Gly39, Val48–Met68, Ala105–Ile125, Val127–Tyr147, Leu150–Ile170, Gly172–Tyr192, Val221–His241, Phe243–Phe263, and Phe282–Trp302.

This sequence belongs to the UbiA prenyltransferase family. Mg(2+) serves as cofactor.

It localises to the cell inner membrane. The catalysed reaction is all-trans-octaprenyl diphosphate + 4-hydroxybenzoate = 4-hydroxy-3-(all-trans-octaprenyl)benzoate + diphosphate. It participates in cofactor biosynthesis; ubiquinone biosynthesis. Functionally, catalyzes the prenylation of para-hydroxybenzoate (PHB) with an all-trans polyprenyl group. Mediates the second step in the final reaction sequence of ubiquinone-8 (UQ-8) biosynthesis, which is the condensation of the polyisoprenoid side chain with PHB, generating the first membrane-bound Q intermediate 3-octaprenyl-4-hydroxybenzoate. The protein is 4-hydroxybenzoate octaprenyltransferase of Psychrobacter arcticus (strain DSM 17307 / VKM B-2377 / 273-4).